Here is a 182-residue protein sequence, read N- to C-terminus: Ribosome maturation factor RimM (182 aa).

Residues 103–182 (GDDYYWKDLM…VIEADWDPGF (80 aa)) form the PRC barrel domain.

This sequence belongs to the RimM family. In terms of assembly, binds ribosomal protein uS19.

It localises to the cytoplasm. Functionally, an accessory protein needed during the final step in the assembly of 30S ribosomal subunit, possibly for assembly of the head region. Essential for efficient processing of 16S rRNA. May be needed both before and after RbfA during the maturation of 16S rRNA. It has affinity for free ribosomal 30S subunits but not for 70S ribosomes. This Serratia proteamaculans (strain 568) protein is Ribosome maturation factor RimM.